We begin with the raw amino-acid sequence, 122 residues long: Large ribosomal subunit protein uL14 (122 aa).

This sequence belongs to the universal ribosomal protein uL14 family. In terms of assembly, part of the 50S ribosomal subunit. Forms a cluster with proteins L3 and L19. In the 70S ribosome, L14 and L19 interact and together make contacts with the 16S rRNA in bridges B5 and B8.

Functionally, binds to 23S rRNA. Forms part of two intersubunit bridges in the 70S ribosome. The polypeptide is Large ribosomal subunit protein uL14 (Desulforamulus reducens (strain ATCC BAA-1160 / DSM 100696 / MI-1) (Desulfotomaculum reducens)).